A 265-amino-acid chain; its full sequence is Tryptophan synthase alpha chain (265 aa).

Catalysis depends on proton acceptor residues glutamate 50 and aspartate 61.

The protein belongs to the TrpA family. In terms of assembly, tetramer of two alpha and two beta chains.

It carries out the reaction (1S,2R)-1-C-(indol-3-yl)glycerol 3-phosphate + L-serine = D-glyceraldehyde 3-phosphate + L-tryptophan + H2O. It participates in amino-acid biosynthesis; L-tryptophan biosynthesis; L-tryptophan from chorismate: step 5/5. The alpha subunit is responsible for the aldol cleavage of indoleglycerol phosphate to indole and glyceraldehyde 3-phosphate. This chain is Tryptophan synthase alpha chain, found in Trichodesmium erythraeum (strain IMS101).